A 318-amino-acid chain; its full sequence is Methionine import ATP-binding protein MetN (318 aa).

The region spanning 2-237 (IEIKDVGKIF…PEGELKKIIE (236 aa)) is the ABC transporter domain. Residue 34-41 (GRSGAGKS) coordinates ATP.

This sequence belongs to the ABC transporter superfamily. Methionine importer (TC 3.A.1.24) family. As to quaternary structure, the complex is composed of two ATP-binding proteins (MetN), two transmembrane proteins (MetI) and a solute-binding protein (MetQ).

It localises to the cell membrane. It catalyses the reaction L-methionine(out) + ATP + H2O = L-methionine(in) + ADP + phosphate + H(+). The catalysed reaction is D-methionine(out) + ATP + H2O = D-methionine(in) + ADP + phosphate + H(+). Functionally, part of the ABC transporter complex MetNIQ involved in methionine import. Responsible for energy coupling to the transport system. The chain is Methionine import ATP-binding protein MetN from Clostridium tetani (strain Massachusetts / E88).